The following is a 540-amino-acid chain: Glucose-6-phosphate isomerase (540 aa).

E346 functions as the Proton donor in the catalytic mechanism. Active-site residues include H377 and K505.

Belongs to the GPI family.

Its subcellular location is the cytoplasm. The enzyme catalyses alpha-D-glucose 6-phosphate = beta-D-fructose 6-phosphate. It functions in the pathway carbohydrate biosynthesis; gluconeogenesis. The protein operates within carbohydrate degradation; glycolysis; D-glyceraldehyde 3-phosphate and glycerone phosphate from D-glucose: step 2/4. Functionally, catalyzes the reversible isomerization of glucose-6-phosphate to fructose-6-phosphate. This is Glucose-6-phosphate isomerase from Francisella tularensis subsp. tularensis (strain SCHU S4 / Schu 4).